The chain runs to 359 residues: Alkanal monooxygenase alpha chain (359 aa).

The protein belongs to the bacterial luciferase oxidoreductase family. Heterodimer of an alpha and a beta chain.

It catalyses the reaction a long-chain fatty aldehyde + FMNH2 + O2 = a long-chain fatty acid + hnu + FMN + H2O + 2 H(+). Its function is as follows. Light-emitting reaction in luminous bacteria. In Photorhabdus laumondii subsp. laumondii (strain DSM 15139 / CIP 105565 / TT01) (Photorhabdus luminescens subsp. laumondii), this protein is Alkanal monooxygenase alpha chain (luxA).